The primary structure comprises 110 residues: Small ribosomal subunit protein bS18 (110 aa).

The span at 1-18 (MSEATTTTTTTSAPRPGG) shows a compositional bias: low complexity. The tract at residues 1–41 (MSEATTTTTTTSAPRPGGRPSGPRPDRGPGGPRKKRPFQRR) is disordered. The segment covering 32 to 41 (PRKKRPFQRR) has biased composition (basic residues).

It belongs to the bacterial ribosomal protein bS18 family. Part of the 30S ribosomal subunit. Forms a tight heterodimer with protein bS6.

Its function is as follows. Binds as a heterodimer with protein bS6 to the central domain of the 16S rRNA, where it helps stabilize the platform of the 30S subunit. This chain is Small ribosomal subunit protein bS18, found in Trichlorobacter lovleyi (strain ATCC BAA-1151 / DSM 17278 / SZ) (Geobacter lovleyi).